The following is a 199-amino-acid chain: Putative acetyltransferase SAR2635 (199 aa).

Belongs to the transferase hexapeptide repeat family.

This Staphylococcus aureus (strain MRSA252) protein is Putative acetyltransferase SAR2635.